Reading from the N-terminus, the 251-residue chain is Putative integrase/recombinase y4eF (251 aa).

The Core-binding (CB) domain occupies 1 to 40 (MLGREDIRTYQVYLANEKKLAPGSIHIALSALRFFFNVTL). Positions 58-231 (KLPIILSPDE…ATNKVCATES (174 aa)) constitute a Tyr recombinase domain. Active-site residues include arginine 93, lysine 118, histidine 183, arginine 186, and histidine 209. Tyrosine 218 serves as the catalytic O-(3'-phospho-DNA)-tyrosine intermediate.

It belongs to the 'phage' integrase family.

The polypeptide is Putative integrase/recombinase y4eF (Sinorhizobium fredii (strain NBRC 101917 / NGR234)).